The chain runs to 334 residues: SH3 and cysteine-rich domain-containing protein 3 (334 aa).

The segment at 1 to 26 is disordered; it reads MAQYDQLEDKDSLDIHDNPPAPENVV. The span at 7-17 shows a compositional bias: basic and acidic residues; it reads LEDKDSLDIHD. The Phorbol-ester/DAG-type zinc-finger motif lies at 62-113; it reads PHKFKDHYCKKPKFCDVCARMIVLNNKFALRCKNCKTNIHHSCQSYVQFQRC. Residues 178-190 show a composition bias toward acidic residues; it reads EEEAQQPKEDEEG. The segment at 178 to 215 is disordered; it reads EEEAQQPKEDEEGAEGKQDGDKKDKTATDDKNKKQQQT. Residues 191–210 show a composition bias toward basic and acidic residues; sequence AEGKQDGDKKDKTATDDKNK. 2 consecutive SH3 domains span residues 217–276 and 277–334; these read SQSH…RVRA and GERV…LHEL.

As to quaternary structure, component of a calcium channel complex with CACNA1S. In terms of tissue distribution, expressed in muscles at the muscle triad.

It localises to the cytoplasm. It is found in the cell membrane. Its subcellular location is the sarcolemma. The protein resides in the T-tubule. In terms of biological role, required for normal excitation-contraction coupling in skeletal muscle and for normal muscle contraction in response to membrane depolarization. Required for normal Ca(2+) release from the sarcplasmic reticulum, which ultimately leads to muscle contraction. Probably functions via its effects on muscle calcium channels. Increases CACNA1S channel activity, in addition to its role in enhancing the expression of CACNA1S at the cell membrane. Has a redundant role in promoting the expression of the calcium channel CACNA1S at the cell membrane. The chain is SH3 and cysteine-rich domain-containing protein 3 from Danio rerio (Zebrafish).